The primary structure comprises 615 residues: Sodium-dependent neutral amino acid transporter B(0)AT3 (615 aa).

Over 1-26 (MAQASGMDPLVDIEDERPKWDNKLQY) the chain is Cytoplasmic. A helical transmembrane segment spans residues 27–47 (LLSCIGFAVGLGNIWRFPYLC). The Extracellular portion of the chain corresponds to 48–52 (HTHGG). The chain crosses the membrane as a helical span at residues 53–73 (GAFLIPYFIALVFEGIPLFYI). At 74–105 (ELAIGQRLRRGSIGVWKTISPYLGGVGLGCFS) the chain is on the cytoplasmic side. A helical membrane pass occupies residues 106–126 (VSFLVSLYYNTILLWVLWFFL). The Extracellular portion of the chain corresponds to 127-177 (NSFQHPLPWSTCPLDLNRTGFVQECQSSGTVSYFWYRQTLNITSDISNTGT). 2 N-linked (GlcNAc...) asparagine glycosylation sites follow: Asn-143 and Asn-167. A helical transmembrane segment spans residues 178-198 (IQWKLFLCLVACWTTVYLCVI). Residues 199–206 (RGIESTGK) lie on the Cytoplasmic side of the membrane. Residues 207–227 (VIYFTALFPYLVLTIFLIRGL) traverse the membrane as a helical segment. At 228–255 (TLPGATEGLTYLFTPNMKILQNSRVWLD) the chain is on the extracellular side. A helical transmembrane segment spans residues 256–276 (AATQIFFSLSLAFGGHIAFAS). Over 277-290 (YNQPRNNCEKDAVT) the chain is Cytoplasmic. Residues 291–311 (IALVNSMTSLYASITIFSIMG) traverse the membrane as a helical segment. The Extracellular segment spans residues 312–397 (FKASNDYGRC…FTEAVLHMPG (86 aa)). A glycan (N-linked (GlcNAc...) asparagine) is linked at Asn-353. The chain crosses the membrane as a helical span at residues 398–418 (ASVWSVLFFGMLFTLGLSSMF). The Cytoplasmic segment spans residues 419–442 (GNMEGVITPLFDMGILPKGVPKET). A helical membrane pass occupies residues 443 to 463 (MTGVVCFICFLSAICFTLQSG). Over 464-472 (SYWLEIFDS) the chain is Extracellular. A helical transmembrane segment spans residues 473–493 (FAASLNLIIFAFMEVVGVIHV). The Cytoplasmic segment spans residues 494–520 (YGIKRFCDDIEWMTGRRPSLYWQVTWR). A helical transmembrane segment spans residues 521–541 (VVSPMLLFGIFLSYIVLLAQS). Residues 542-571 (SPSYKAWNPQYEHFPSREEKLYPGWVQVTC) are Extracellular-facing. A helical transmembrane segment spans residues 572-592 (VLLSFLPSLWVPGIALAQLLF). Residues 593–615 (QYRQRWKNTHLESALKPQESRGC) are Cytoplasmic-facing.

Belongs to the sodium:neurotransmitter symporter (SNF) (TC 2.A.22) family. SLC6A18 subfamily. In terms of assembly, interacts with CLTRN; this interaction regulates the trafficking of SLC6A18 to the cell membrane and its activity. Kidney-specific expression.

Its subcellular location is the apical cell membrane. It is found in the cell membrane. It carries out the reaction L-alanine(out) + chloride(out) + 2 Na(+)(out) = L-alanine(in) + chloride(in) + 2 Na(+)(in). The catalysed reaction is glycine(out) + chloride(out) + 2 Na(+)(out) = glycine(in) + chloride(in) + 2 Na(+)(in). It catalyses the reaction L-methionine(out) + chloride(out) + 2 Na(+)(out) = L-methionine(in) + chloride(in) + 2 Na(+)(in). The enzyme catalyses L-valine(out) + chloride(out) + 2 Na(+)(out) = L-valine(in) + chloride(in) + 2 Na(+)(in). It carries out the reaction L-isoleucine(out) + chloride(out) + 2 Na(+)(out) = L-isoleucine(in) + chloride(in) + 2 Na(+)(in). The catalysed reaction is L-serine(out) + chloride(out) + 2 Na(+)(out) = L-serine(in) + chloride(in) + 2 Na(+)(in). It catalyses the reaction L-leucine(out) + chloride(out) + 2 Na(+)(out) = L-leucine(in) + chloride(in) + 2 Na(+)(in). Its function is as follows. Symporter that transports one amino acid molecule together with two sodium and one chloride ions in kidneys and plays a role in the neutral amino acids reabsorption. Preferentially transports neutral amino acids such as L-glycine and L-alanine but also other neutral amino acids. Required CLTRN for cell surface expression and for its amino acid transporter activity. The transport mechanism is pH-independent. The sequence is that of Sodium-dependent neutral amino acid transporter B(0)AT3 from Rattus norvegicus (Rat).